A 120-amino-acid polypeptide reads, in one-letter code: Ribonuclease P protein component (120 aa).

It belongs to the RnpA family. As to quaternary structure, consists of a catalytic RNA component (M1 or rnpB) and a protein subunit.

It carries out the reaction Endonucleolytic cleavage of RNA, removing 5'-extranucleotides from tRNA precursor.. Its function is as follows. RNaseP catalyzes the removal of the 5'-leader sequence from pre-tRNA to produce the mature 5'-terminus. It can also cleave other RNA substrates such as 4.5S RNA. The protein component plays an auxiliary but essential role in vivo by binding to the 5'-leader sequence and broadening the substrate specificity of the ribozyme. The protein is Ribonuclease P protein component of Chlamydia trachomatis serovar D (strain ATCC VR-885 / DSM 19411 / UW-3/Cx).